A 645-amino-acid chain; its full sequence is Translation factor GUF1 homolog, mitochondrial (645 aa).

The tr-type G domain maps to 40-215 (DKIRNFGIVA…AIIDRVPAPT (176 aa)). Residues 49 to 56 (AHVDHGKS), 108 to 112 (DTPGH), and 162 to 165 (NKID) each bind GTP.

The protein belongs to the TRAFAC class translation factor GTPase superfamily. Classic translation factor GTPase family. LepA subfamily.

It is found in the mitochondrion inner membrane. The enzyme catalyses GTP + H2O = GDP + phosphate + H(+). In terms of biological role, promotes mitochondrial protein synthesis. May act as a fidelity factor of the translation reaction, by catalyzing a one-codon backward translocation of tRNAs on improperly translocated ribosomes. Binds to mitochondrial ribosomes in a GTP-dependent manner. This Caenorhabditis elegans protein is Translation factor GUF1 homolog, mitochondrial.